Reading from the N-terminus, the 277-residue chain is 3-methyl-2-oxobutanoate hydroxymethyltransferase (277 aa).

2 residues coordinate Mg(2+): Asp53 and Asp96. 3-methyl-2-oxobutanoate-binding positions include 53–54, Asp96, and Lys126; that span reads DS. Residue Glu128 participates in Mg(2+) binding. The active-site Proton acceptor is Glu195.

Belongs to the PanB family. Homodecamer; pentamer of dimers. Mg(2+) serves as cofactor.

The protein localises to the cytoplasm. The catalysed reaction is 3-methyl-2-oxobutanoate + (6R)-5,10-methylene-5,6,7,8-tetrahydrofolate + H2O = 2-dehydropantoate + (6S)-5,6,7,8-tetrahydrofolate. It participates in cofactor biosynthesis; (R)-pantothenate biosynthesis; (R)-pantoate from 3-methyl-2-oxobutanoate: step 1/2. Functionally, catalyzes the reversible reaction in which hydroxymethyl group from 5,10-methylenetetrahydrofolate is transferred onto alpha-ketoisovalerate to form ketopantoate. The protein is 3-methyl-2-oxobutanoate hydroxymethyltransferase of Chlorobium phaeobacteroides (strain BS1).